A 756-amino-acid chain; its full sequence is NADP-dependent malic enzyme (756 aa).

The interval 1-428 (MTEQLRQAAL…KLTQFVYKTS (428 aa)) is malic enzyme. Tyr39 acts as the Proton donor in catalysis. Lys94 (proton acceptor) is an active-site residue. Positions 136, 137, and 162 each coordinate a divalent metal cation. Residues 195-198 (AGAA), Asn288, and Asn320 each bind NADP(+). Positions 429-756 (LFMRPIFSQA…AYAAVKAQQE (328 aa)) are phosphate acetyltransferase.

This sequence in the N-terminal section; belongs to the malic enzymes family. In the C-terminal section; belongs to the phosphate acetyltransferase and butyryltransferase family. Requires Mg(2+) as cofactor. Mn(2+) serves as cofactor.

It catalyses the reaction (S)-malate + NADP(+) = pyruvate + CO2 + NADPH. It carries out the reaction oxaloacetate + H(+) = pyruvate + CO2. The polypeptide is NADP-dependent malic enzyme (maeB) (Haemophilus influenzae (strain ATCC 51907 / DSM 11121 / KW20 / Rd)).